Reading from the N-terminus, the 151-residue chain is Nucleoside diphosphate kinase (151 aa).

Positions 9, 57, 86, 92, 103, and 113 each coordinate ATP. Catalysis depends on histidine 116, which acts as the Pros-phosphohistidine intermediate.

The protein belongs to the NDK family. As to quaternary structure, homotetramer. The cofactor is Mg(2+).

It localises to the cytoplasm. It catalyses the reaction a 2'-deoxyribonucleoside 5'-diphosphate + ATP = a 2'-deoxyribonucleoside 5'-triphosphate + ADP. It carries out the reaction a ribonucleoside 5'-diphosphate + ATP = a ribonucleoside 5'-triphosphate + ADP. Functionally, major role in the synthesis of nucleoside triphosphates other than ATP. The ATP gamma phosphate is transferred to the NDP beta phosphate via a ping-pong mechanism, using a phosphorylated active-site intermediate. The chain is Nucleoside diphosphate kinase from Chloroflexus aggregans (strain MD-66 / DSM 9485).